The chain runs to 247 residues: 2,3-bisphosphoglycerate-dependent phosphoglycerate mutase (247 aa).

Substrate is bound by residues 8 to 15 (RHGESQWN), 21 to 22 (TG), R60, 87 to 90 (ERHY), K98, 114 to 115 (RR), and 183 to 184 (GN). The active-site Tele-phosphohistidine intermediate is H9. E87 serves as the catalytic Proton donor/acceptor.

This sequence belongs to the phosphoglycerate mutase family. BPG-dependent PGAM subfamily.

It carries out the reaction (2R)-2-phosphoglycerate = (2R)-3-phosphoglycerate. The protein operates within carbohydrate degradation; glycolysis; pyruvate from D-glyceraldehyde 3-phosphate: step 3/5. Functionally, catalyzes the interconversion of 2-phosphoglycerate and 3-phosphoglycerate. This Chlorobium limicola (strain DSM 245 / NBRC 103803 / 6330) protein is 2,3-bisphosphoglycerate-dependent phosphoglycerate mutase.